We begin with the raw amino-acid sequence, 302 residues long: Merozoite surface protein 2 (302 aa).

Positions 1–20 are cleaved as a signal peptide; that stretch reads MKVIKTLSIINFFIFVTFNI. N-linked (GlcNAc...) asparagine glycosylation is found at N22 and N36. The tract at residues 44-228 is polymorphic region; sequence EESKPPTGAV…EQTESPELQS (185 aa). The stretch at 55-60 is one 1; partial repeat; the sequence is GSGAGA. Residues 55 to 113 form an 8 X 8 AA tandem repeats of G-S-G-A-G-A-V-A region; the sequence is GSGAGAGSGAGAVAGSGAGAVAGSGAGAVAGSGAGAVAGSGAGAVAGSGAGAVAGSGAG. 6 tandem repeats follow at residues 61 to 68, 69 to 76, 77 to 84, 85 to 92, 93 to 100, and 101 to 108. The stretch at 109–113 is one 8; partial repeat; it reads GSGAG. A disordered region spans residues 114–263; sequence NGANPGADAE…DSQKECTDGN (150 aa). The span at 125–150 shows a compositional bias: low complexity; the sequence is SPSTPATTTTTTTTNDAEASTSTSSE. Over residues 151–167 the composition is skewed to basic and acidic residues; that stretch reads NRNHNNAETNPKGKGEV. Polar residues-rich tracts occupy residues 169-195 and 202-230; these read KPNQANKETQNNSNVQQDSQTKSNVPR and KSPTAQPEQAENSAPTAEQTESPELQSAP. Residue N179 is glycosylated (N-linked (GlcNAc...) asparagine). N251 carries N-linked (GlcNAc...) asparagine glycosylation. An intrachain disulfide couples C259 to C267. Residues N275 and N276 are each glycosylated (N-linked (GlcNAc...) asparagine). The GPI-anchor amidated asparagine moiety is linked to residue N276. Positions 277–302 are cleaved as a propeptide — removed in mature form; it reads SSNIASINKFVVLISATLVLSFAIFI.

The protein resides in the cell membrane. Functionally, may play a role in the merozoite attachment to the erythrocyte. This chain is Merozoite surface protein 2, found in Plasmodium falciparum (isolate tak 9).